The chain runs to 341 residues: Phosphate acyltransferase (341 aa).

Belongs to the PlsX family. In terms of assembly, homodimer. Probably interacts with PlsY.

It localises to the cytoplasm. The catalysed reaction is a fatty acyl-[ACP] + phosphate = an acyl phosphate + holo-[ACP]. The protein operates within lipid metabolism; phospholipid metabolism. Catalyzes the reversible formation of acyl-phosphate (acyl-PO(4)) from acyl-[acyl-carrier-protein] (acyl-ACP). This enzyme utilizes acyl-ACP as fatty acyl donor, but not acyl-CoA. This Vibrio vulnificus (strain CMCP6) protein is Phosphate acyltransferase.